Consider the following 148-residue polypeptide: Holo-[acyl-carrier-protein] synthase (148 aa).

Mg(2+) is bound by residues D9 and E63.

This sequence belongs to the P-Pant transferase superfamily. AcpS family. Mg(2+) is required as a cofactor.

The protein resides in the cytoplasm. It catalyses the reaction apo-[ACP] + CoA = holo-[ACP] + adenosine 3',5'-bisphosphate + H(+). Functionally, transfers the 4'-phosphopantetheine moiety from coenzyme A to a Ser of acyl-carrier-protein. The sequence is that of Holo-[acyl-carrier-protein] synthase from Burkholderia cenocepacia (strain HI2424).